The primary structure comprises 1217 residues: ATP-dependent helicase/nuclease subunit A (1217 aa).

The 466-residue stretch at Val10–Arg475 folds into the UvrD-like helicase ATP-binding domain. An ATP-binding site is contributed by Ala31–Thr38. The 311-residue stretch at Lys476–Gly786 folds into the UvrD-like helicase C-terminal domain.

It belongs to the helicase family. AddA subfamily. Heterodimer of AddA and AddB/RexB. Mg(2+) is required as a cofactor.

It carries out the reaction Couples ATP hydrolysis with the unwinding of duplex DNA by translocating in the 3'-5' direction.. It catalyses the reaction ATP + H2O = ADP + phosphate + H(+). The heterodimer acts as both an ATP-dependent DNA helicase and an ATP-dependent, dual-direction single-stranded exonuclease. Recognizes the chi site generating a DNA molecule suitable for the initiation of homologous recombination. The AddA nuclease domain is required for chi fragment generation; this subunit has the helicase and 3' -&gt; 5' nuclease activities. The chain is ATP-dependent helicase/nuclease subunit A from Staphylococcus aureus (strain NCTC 8325 / PS 47).